We begin with the raw amino-acid sequence, 315 residues long: T-box transcription factor tbx-8 (315 aa).

A DNA-binding region (T-box) is located at residues 11 to 195 (EDQDKLWNLF…FNPFAKGFRE (185 aa)). The segment covering 193–203 (FREGSQSDRKR) has biased composition (basic and acidic residues). 2 disordered regions span residues 193–235 (FREG…SVSP) and 293–315 (PPPSLKNVKKEEQEDIEQEINVV). The span at 205–225 (SPSADDSTTDESSSQVSSPQP) shows a compositional bias: low complexity. Positions 305 to 315 (QEDIEQEINVV) are enriched in acidic residues.

It localises to the nucleus. In terms of biological role, transcription factor. Involved in the control of early morphogenesis of the intestine, hypodermis and body-wall muscle. Involved in regulating expression of vab-7. Appears to have partially redundant function to tbx-9. The protein is T-box transcription factor tbx-8 (tbx-8) of Caenorhabditis elegans.